The primary structure comprises 85 residues: UPF0434 protein HNE_3545 (85 aa).

It belongs to the UPF0434 family.

The sequence is that of UPF0434 protein HNE_3545 from Hyphomonas neptunium (strain ATCC 15444).